Consider the following 152-residue polypeptide: uncharacterized protein (152 aa).

The disordered stretch occupies residues 127 to 152 (EKEKAERKAEKAKKNKKKSSTKTKKK). Residues 136–152 (EKAKKNKKKSSTKTKKK) are compositionally biased toward basic residues.

This sequence belongs to the mimivirus R546 family.

This is an uncharacterized protein from Sputnik virophage.